The sequence spans 208 residues: Small ribosomal subunit protein uS4 (208 aa).

Residues arginine 98–leucine 161 enclose the S4 RNA-binding domain.

This sequence belongs to the universal ribosomal protein uS4 family. As to quaternary structure, part of the 30S ribosomal subunit. Contacts protein S5. The interaction surface between S4 and S5 is involved in control of translational fidelity.

In terms of biological role, one of the primary rRNA binding proteins, it binds directly to 16S rRNA where it nucleates assembly of the body of the 30S subunit. With S5 and S12 plays an important role in translational accuracy. This is Small ribosomal subunit protein uS4 from Pelotomaculum thermopropionicum (strain DSM 13744 / JCM 10971 / SI).